The following is a 188-amino-acid chain: Large ribosomal subunit protein bL9 (188 aa).

Over residues 149–170 (RSEEEAERQARGEEIGVEKEEP) the composition is skewed to basic and acidic residues. The interval 149–188 (RSEEEAERQARGEEIGVEKEEPSGFVEEALEETVEAPAEA) is disordered.

This sequence belongs to the bacterial ribosomal protein bL9 family.

In terms of biological role, binds to the 23S rRNA. This is Large ribosomal subunit protein bL9 from Gluconacetobacter diazotrophicus (strain ATCC 49037 / DSM 5601 / CCUG 37298 / CIP 103539 / LMG 7603 / PAl5).